Reading from the N-terminus, the 298-residue chain is Protoheme IX farnesyltransferase (298 aa).

9 consecutive transmembrane segments (helical) span residues 26–46 (VVSL…PGAV), 52–72 (IFGT…NCLV), 93–113 (VSVP…LFML), 120–140 (LTMW…TVIL), 148–168 (IVIG…AVTG), 174–194 (ALLL…ALAL), 219–239 (LHVL…YLTQ), 241–261 (SGLI…YYAI), and 278–298 (YSIA…YFYF).

It belongs to the UbiA prenyltransferase family. Protoheme IX farnesyltransferase subfamily.

The protein resides in the cell inner membrane. The enzyme catalyses heme b + (2E,6E)-farnesyl diphosphate + H2O = Fe(II)-heme o + diphosphate. It participates in porphyrin-containing compound metabolism; heme O biosynthesis; heme O from protoheme: step 1/1. In terms of biological role, converts heme B (protoheme IX) to heme O by substitution of the vinyl group on carbon 2 of heme B porphyrin ring with a hydroxyethyl farnesyl side group. The sequence is that of Protoheme IX farnesyltransferase from Nitrosomonas europaea (strain ATCC 19718 / CIP 103999 / KCTC 2705 / NBRC 14298).